Reading from the N-terminus, the 165-residue chain is Chaperone protein SicA (165 aa).

Belongs to the LcrH/SycD chaperone family. Dimer or higher-order oligomers.

The protein localises to the cytoplasm. Its function is as follows. Type III secretion-associated chaperone required for SipB and SipC stabilization. Prevents premature association of SipB with SipC, which may lead to their targeting for degradation. Along with InvF, required for transcription activation of sigDE (sopB pipC), sicAsipBCDA, and sopE. The sequence is that of Chaperone protein SicA (sicA) from Salmonella dublin.